The primary structure comprises 268 residues: UPF0328 protein ECU05_1640/ECU11_0090 (268 aa).

This sequence belongs to the UPF0328 family.

This is UPF0328 protein ECU05_1640/ECU11_0090 from Encephalitozoon cuniculi (strain GB-M1) (Microsporidian parasite).